We begin with the raw amino-acid sequence, 248 residues long: Ribosomal RNA small subunit methyltransferase G (248 aa).

Positions 1-23 (MFHVKHVGPVEPAAGDPEVPPVA) are disordered. S-adenosyl-L-methionine contacts are provided by residues G93, L98, 143-144 (AE), and R161. Residues 226 to 248 (VVSARRAKPPHPKSARTGKAGTR) are disordered. Basic residues predominate over residues 230 to 248 (RRAKPPHPKSARTGKAGTR).

This sequence belongs to the methyltransferase superfamily. RNA methyltransferase RsmG family.

It is found in the cytoplasm. Specifically methylates the N7 position of guanine in position 518 of 16S rRNA. The protein is Ribosomal RNA small subunit methyltransferase G of Mycolicibacterium paratuberculosis (strain ATCC BAA-968 / K-10) (Mycobacterium paratuberculosis).